A 494-amino-acid chain; its full sequence is Smoothelin-like protein 1 (494 aa).

4 stretches are compositionally biased toward basic and acidic residues: residues 1–10, 74–104, 112–166, and 179–232; these read MEQKEGKLSE, DEVK…KEET, TGRK…KATV, and TGQR…KEEA. The interval 1-348 is disordered; it reads MEQKEGKLSE…ARPRGPRAQN (348 aa). Positions 123–145 form a coiled coil; the sequence is KEAEEKESTLASEKQKAEEKEAK. The span at 233–255 shows a compositional bias: acidic residues; that stretch reads DAKEEAEDAEEAEPGSPSEEQEQ. Low complexity-rich tracts occupy residues 269 to 279 and 302 to 314; these read PSSPEEWPESP and SPSA…SDVP. The segment covering 324–335 has biased composition (basic and acidic residues); sequence GEKKEKAPERRV. S336 is modified (phosphoserine). In terms of domain architecture, Calponin-homology (CH) spans 378 to 484; it reads GGVKNMLLEW…YIQELYRSLV (107 aa). Residues 476-494 form a calmodulin-binding region; the sequence is IQELYRSLVQKGLVKTKKK.

The protein belongs to the smoothelin family. Interacts with PPP1R12A. Post-translationally, maximal phosphorylation of Ser-336 correlates with maximal relaxation of aorta in response to acetylcholine. In terms of tissue distribution, expressed in striated muscles, specifically in type 2a fibers (at protein level).

The protein resides in the cytoplasm. The protein localises to the myofibril. It localises to the sarcomere. It is found in the i band. Its subcellular location is the m line. The protein resides in the nucleus. Functionally, plays a role in the regulation of contractile properties of both striated and smooth muscles. When unphosphorylated, may inhibit myosin dephosphorylation. Phosphorylation at Ser-299 reduces this inhibitory activity. This is Smoothelin-like protein 1 (SMTNL1) from Homo sapiens (Human).